The following is a 122-amino-acid chain: Large ribosomal subunit protein uL14 (122 aa).

The protein belongs to the universal ribosomal protein uL14 family. As to quaternary structure, part of the 50S ribosomal subunit. Forms a cluster with proteins L3 and L19. In the 70S ribosome, L14 and L19 interact and together make contacts with the 16S rRNA in bridges B5 and B8.

Binds to 23S rRNA. Forms part of two intersubunit bridges in the 70S ribosome. This chain is Large ribosomal subunit protein uL14, found in Lysinibacillus sphaericus (strain C3-41).